The chain runs to 2153 residues: RNA-directed RNA polymerase L (2153 aa).

Residues His36, Glu54, Asp97, Glu110, and Val111 each contribute to the Mn(2+) site. Catalysis depends on Lys124, which acts as the For endonuclease activity. Positions 957–1143 (TGNVIKFKRR…AVNQEMWKSM (187 aa)) constitute a RdRp catalytic domain. Asp1100 provides a ligand contact to Mg(2+). Residues 1291–2153 (KQAFYSYKHT…FPHDPVSSFY (863 aa)) are interaction with the viral nucleoprotein.

This sequence belongs to the Bunyavirales RNA polymerase family. Interacts with the viral nucleoprotein; this interaction is required for RdRp function. Requires Mn(2+) as cofactor. It depends on Mg(2+) as a cofactor.

Its subcellular location is the host cytoplasm. It localises to the host perinuclear region. It catalyses the reaction RNA(n) + a ribonucleoside 5'-triphosphate = RNA(n+1) + diphosphate. RNA-dependent RNA polymerase, which is responsible for the replication and transcription of the viral RNA genome using antigenomic RNA as an intermediate. During transcription, synthesizes subgenomic RNAs and assures their capping by a cap-snatching mechanism, which involves the endonuclease activity cleaving the host capped pre-mRNAs. These short capped RNAs are then used as primers for viral transcription. Cleaves ssRNA substrates but not DNA. Seems to downregulate the expression of its own and heterologous mRNAs through its endonuclease activity. The chain is RNA-directed RNA polymerase L from Sin Nombre orthohantavirus (SNV).